Reading from the N-terminus, the 519-residue chain is Ribonuclease Y 1 (519 aa).

Residues 3–23 (VPIVILAIIAIVVGVVGGYYL) traverse the membrane as a helical segment. Residues 92-120 (QREETLDRKDNSLEKRENSLNRRDKKLSA) show a composition bias toward basic and acidic residues. Residues 92–124 (QREETLDRKDNSLEKRENSLNRRDKKLSAEEQN) form a disordered region. Residues 209–272 (TITVVTLPND…EVAKIALEKL (64 aa)) enclose the KH domain. Positions 335-428 (ALAHSIEVAK…VSTADIISAT (94 aa)) constitute an HD domain.

It belongs to the RNase Y family.

The protein resides in the cell membrane. Its function is as follows. Endoribonuclease that initiates mRNA decay. The chain is Ribonuclease Y 1 from Levilactobacillus brevis (strain ATCC 367 / BCRC 12310 / CIP 105137 / JCM 1170 / LMG 11437 / NCIMB 947 / NCTC 947) (Lactobacillus brevis).